A 233-amino-acid polypeptide reads, in one-letter code: MFNDHLAGAGNALTGIVGMAPEARPWANFVTMQLLVVAIIVVLFAILRPRLSPDRPGKLQHTFELVYGFLHEQAEEQIGHEGHHYLAFFGTIFIFILFANLIGVVPGFEAPTMVPSVPAGCAIAAFFYYNIVGVQANGLGRYLAHFAGPMPLLAPLMIPIELVSHMARPLSLTIRLFANMYAGEQVTMVFLKLTFLFVPAVFMGLHVFVSFLQAYIFMLLTMMYVAGAVAHEH.

6 helical membrane passes run 27-47, 85-105, 114-134, 143-163, 189-209, and 210-230; these read ANFVTMQLLVVAIIVVLFAIL, YLAFFGTIFIFILFANLIGVV, VPSVPAGCAIAAFFYYNIVGV, LAHFAGPMPLLAPLMIPIELV, VFLKLTFLFVPAVFMGLHVFV, and SFLQAYIFMLLTMMYVAGAVA.

This sequence belongs to the ATPase A chain family. As to quaternary structure, F-type ATPases have 2 components, CF(1) - the catalytic core - and CF(0) - the membrane proton channel. CF(1) has five subunits: alpha(3), beta(3), gamma(1), delta(1), epsilon(1). CF(0) has three main subunits: a(1), b(2) and c(9-12). The alpha and beta chains form an alternating ring which encloses part of the gamma chain. CF(1) is attached to CF(0) by a central stalk formed by the gamma and epsilon chains, while a peripheral stalk is formed by the delta and b chains.

It localises to the cell inner membrane. Key component of the proton channel; it plays a direct role in the translocation of protons across the membrane. This is ATP synthase subunit a from Solibacter usitatus (strain Ellin6076).